The sequence spans 1354 residues: Rho-associated protein kinase 1 (1354 aa).

Ser-2 carries the post-translational modification N-acetylserine. One can recognise a Protein kinase domain in the interval Tyr-76–Phe-338. ATP is bound by residues Ile-82 to Val-90 and Lys-105. Asp-198 (proton acceptor) is an active-site residue. An AGC-kinase C-terminal domain is found at Asp-341–Ala-409. The interval Phe-368–Arg-727 is interaction with FHOD1. Positions Lys-422 to Lys-692 form a coiled coil. The region spanning Ser-479 to Thr-556 is the REM-1 domain. Residue Lys-647 is modified to N6-acetyllysine. The interval Glu-707–Ser-946 is SHROOM3 binding. Positions Thr-949–Phe-1015 constitute a RhoBD domain. The RHOA binding stretch occupies residues Leu-998–Met-1010. Positions Asn-1011–Ser-1102 form a coiled coil. A phosphoserine mark is found at Ser-1105 and Ser-1108. The auto-inhibitory stretch occupies residues Asn-1115–Ser-1354. The region spanning Glu-1118 to Pro-1317 is the PH domain. Residues Gly-1228 to Cys-1281 form a Phorbol-ester/DAG-type zinc finger. The segment at Pro-1320–Ser-1354 is disordered. Ser-1328 is subject to Phosphoserine. A compositionally biased stretch (polar residues) spans Arg-1330–Ser-1354.

It belongs to the protein kinase superfamily. AGC Ser/Thr protein kinase family. In terms of assembly, homodimer. Interacts with RHOB, RHOC, MYLC2B and PTEN. Interacts with ITGB1BP1 (via N-terminus and PTB domain). Interacts with RHOA (activated by GTP), CHORDC1, DAPK3, GEM, JIP3, RHOE, PPP1R12A, PFN1, LIMK1, LIMK2 and TSG101. Interacts with FHOD1 in a Src-dependent manner. Interacts with SHROOM3. Mg(2+) serves as cofactor. Post-translationally, autophosphorylated on serine and threonine residues. In terms of processing, cleaved by caspase-3 during apoptosis. This leads to constitutive activation of the kinase and membrane blebbing. Detected in blood platelets.

Its subcellular location is the cytoplasm. The protein localises to the cytoskeleton. It is found in the microtubule organizing center. The protein resides in the centrosome. It localises to the centriole. Its subcellular location is the golgi apparatus membrane. The protein localises to the cell projection. It is found in the bleb. The protein resides in the cell membrane. It localises to the lamellipodium. Its subcellular location is the ruffle. The enzyme catalyses L-seryl-[protein] + ATP = O-phospho-L-seryl-[protein] + ADP + H(+). It carries out the reaction L-threonyl-[protein] + ATP = O-phospho-L-threonyl-[protein] + ADP + H(+). With respect to regulation, activated by RHOA binding. Inhibited by Y-27632. Its function is as follows. Protein kinase which is a key regulator of the actin cytoskeleton and cell polarity. Involved in regulation of smooth muscle contraction, actin cytoskeleton organization, stress fiber and focal adhesion formation, neurite retraction, cell adhesion and motility via phosphorylation of DAPK3, GFAP, LIMK1, LIMK2, MYL9/MLC2, TPPP, PFN1 and PPP1R12A. Phosphorylates FHOD1 and acts synergistically with it to promote SRC-dependent non-apoptotic plasma membrane blebbing. Phosphorylates JIP3 and regulates the recruitment of JNK to JIP3 upon UVB-induced stress. Acts as a suppressor of inflammatory cell migration by regulating PTEN phosphorylation and stability. Acts as a negative regulator of VEGF-induced angiogenic endothelial cell activation. Required for centrosome positioning and centrosome-dependent exit from mitosis. Plays a role in terminal erythroid differentiation. Inhibits podocyte motility via regulation of actin cytoskeletal dynamics and phosphorylation of CFL1. Promotes keratinocyte terminal differentiation. Involved in osteoblast compaction through the fibronectin fibrillogenesis cell-mediated matrix assembly process, essential for osteoblast mineralization. May regulate closure of the eyelids and ventral body wall by inducing the assembly of actomyosin bundles. The sequence is that of Rho-associated protein kinase 1 (ROCK1) from Homo sapiens (Human).